Reading from the N-terminus, the 208-residue chain is uncharacterized protein (208 aa).

The first 34 residues, 1-34, serve as a signal peptide directing secretion; that stretch reads MPSHCRERLPFALHFFAVAYGASLWILGSHGLAA.

This is an uncharacterized protein from Sinorhizobium fredii (strain NBRC 101917 / NGR234).